We begin with the raw amino-acid sequence, 412 residues long: Serine hydroxymethyltransferase (412 aa).

Residues L117 and 121–123 contribute to the (6S)-5,6,7,8-tetrahydrofolate site; that span reads GHL. K226 bears the N6-(pyridoxal phosphate)lysine mark. A (6S)-5,6,7,8-tetrahydrofolate-binding site is contributed by 349–351; the sequence is SPF.

Belongs to the SHMT family. Homodimer. It depends on pyridoxal 5'-phosphate as a cofactor.

Its subcellular location is the cytoplasm. The catalysed reaction is (6R)-5,10-methylene-5,6,7,8-tetrahydrofolate + glycine + H2O = (6S)-5,6,7,8-tetrahydrofolate + L-serine. It participates in one-carbon metabolism; tetrahydrofolate interconversion. It functions in the pathway amino-acid biosynthesis; glycine biosynthesis; glycine from L-serine: step 1/1. Functionally, catalyzes the reversible interconversion of serine and glycine with tetrahydrofolate (THF) serving as the one-carbon carrier. This reaction serves as the major source of one-carbon groups required for the biosynthesis of purines, thymidylate, methionine, and other important biomolecules. Also exhibits THF-independent aldolase activity toward beta-hydroxyamino acids, producing glycine and aldehydes, via a retro-aldol mechanism. The sequence is that of Serine hydroxymethyltransferase from Geobacillus thermodenitrificans (strain NG80-2).